The primary structure comprises 156 residues: 6,7-dimethyl-8-ribityllumazine synthase (156 aa).

Residues Phe23, 57 to 59, and 81 to 83 contribute to the 5-amino-6-(D-ribitylamino)uracil site; these read AFE and AVI. 86–87 provides a ligand contact to (2S)-2-hydroxy-3-oxobutyl phosphate; it reads AT. The active-site Proton donor is His89. Position 114 (Asn114) interacts with 5-amino-6-(D-ribitylamino)uracil. (2S)-2-hydroxy-3-oxobutyl phosphate is bound at residue Arg128.

Belongs to the DMRL synthase family.

The catalysed reaction is (2S)-2-hydroxy-3-oxobutyl phosphate + 5-amino-6-(D-ribitylamino)uracil = 6,7-dimethyl-8-(1-D-ribityl)lumazine + phosphate + 2 H2O + H(+). It participates in cofactor biosynthesis; riboflavin biosynthesis; riboflavin from 2-hydroxy-3-oxobutyl phosphate and 5-amino-6-(D-ribitylamino)uracil: step 1/2. Functionally, catalyzes the formation of 6,7-dimethyl-8-ribityllumazine by condensation of 5-amino-6-(D-ribitylamino)uracil with 3,4-dihydroxy-2-butanone 4-phosphate. This is the penultimate step in the biosynthesis of riboflavin. The protein is 6,7-dimethyl-8-ribityllumazine synthase of Aliarcobacter butzleri (strain RM4018) (Arcobacter butzleri).